The following is a 392-amino-acid chain: Cellobiose 2-epimerase (392 aa).

The protein belongs to the cellobiose 2-epimerase family.

It catalyses the reaction D-cellobiose = beta-D-glucosyl-(1-&gt;4)-D-mannopyranose. In terms of biological role, catalyzes the reversible epimerization of cellobiose to 4-O-beta-D-glucopyranosyl-D-mannose (Glc-Man). Can also epimerize cellotriose to Glc-Glc-Man, cellotetraose to Glc-Glc-Glc-Man, lactose to epilactose, and mannobiose to 4-O-beta-D-mannopyranosyl-D-glucopyranose (Man-Glc). May function as a mannobiose 2-epimerase in vivo and be involved in a mannan catabolic pathway which feeds into glycolysis. The protein is Cellobiose 2-epimerase (bfce) of Bacteroides fragilis (strain ATCC 25285 / DSM 2151 / CCUG 4856 / JCM 11019 / LMG 10263 / NCTC 9343 / Onslow / VPI 2553 / EN-2).